The sequence spans 253 residues: 5'-nucleotidase SurE (253 aa).

Positions 8, 9, 40, and 93 each coordinate a divalent metal cation.

The protein belongs to the SurE nucleotidase family. It depends on a divalent metal cation as a cofactor.

The protein localises to the cytoplasm. The catalysed reaction is a ribonucleoside 5'-phosphate + H2O = a ribonucleoside + phosphate. Nucleotidase that shows phosphatase activity on nucleoside 5'-monophosphates. This chain is 5'-nucleotidase SurE, found in Haemophilus ducreyi (strain 35000HP / ATCC 700724).